The primary structure comprises 320 residues: uncharacterized protein (320 aa).

An FHA domain is found at 22–86 (KTIGRSSSFD…IRDLNNKTGT (65 aa)). The interval 242-264 (TDTDTTEEKEEEEEKEEGDDEEG) is disordered.

This is an uncharacterized protein from Saccharomyces cerevisiae (strain ATCC 204508 / S288c) (Baker's yeast).